Reading from the N-terminus, the 434-residue chain is Arginine/serine-rich coiled-coil protein 2 (434 aa).

Over residues 1–27 the composition is skewed to basic and acidic residues; the sequence is MAASDTERDGLAPEKTSPDRDKKKEQS. Positions 1–230 are disordered; the sequence is MAASDTERDG…PSPPPFRGRN (230 aa). Position 2 is an N-acetylalanine (A2). S4 is subject to Phosphoserine. A phosphothreonine mark is found at T6 and T16. Phosphoserine is present on residues S17, S30, and S32. Over residues 35–51 the composition is skewed to basic residues; it reads ASKHHYSRSRSRSRERK. A compositionally biased stretch (basic and acidic residues) spans 66 to 111; that stretch reads RSKEGRRHESKDKSSKKHKSEEHNDKEHSSDKGRERLNSSENGEDR. The residue at position 104 (S104) is a Phosphoserine. Over residues 112-214 the composition is skewed to basic residues; that stretch reads HKRKERKSSR…KRIEKPRRFS (103 aa). Residues 230 to 270 are a coiled coil; that stretch reads NTAMDAQEALARRLERAKKLQEQREKEMVEKQKQQEIAAAA. K375 participates in a covalent cross-link: Glycyl lysine isopeptide (Lys-Gly) (interchain with G-Cter in SUMO1); alternate. A Glycyl lysine isopeptide (Lys-Gly) (interchain with G-Cter in SUMO2); alternate cross-link involves residue K375. Phosphoserine is present on S376.

It belongs to the RSRC2 family.

This is Arginine/serine-rich coiled-coil protein 2 (RSRC2) from Homo sapiens (Human).